The sequence spans 628 residues: 1-deoxy-D-xylulose-5-phosphate synthase (628 aa).

Residues His-72 and 113 to 115 (GHA) contribute to the thiamine diphosphate site. Asp-144 contacts Mg(2+). Residues 145-146 (GA), Asn-174, Tyr-287, and Glu-370 each bind thiamine diphosphate. Asn-174 lines the Mg(2+) pocket.

This sequence belongs to the transketolase family. DXPS subfamily. As to quaternary structure, homodimer. Mg(2+) serves as cofactor. It depends on thiamine diphosphate as a cofactor.

It catalyses the reaction D-glyceraldehyde 3-phosphate + pyruvate + H(+) = 1-deoxy-D-xylulose 5-phosphate + CO2. It functions in the pathway metabolic intermediate biosynthesis; 1-deoxy-D-xylulose 5-phosphate biosynthesis; 1-deoxy-D-xylulose 5-phosphate from D-glyceraldehyde 3-phosphate and pyruvate: step 1/1. In terms of biological role, catalyzes the acyloin condensation reaction between C atoms 2 and 3 of pyruvate and glyceraldehyde 3-phosphate to yield 1-deoxy-D-xylulose-5-phosphate (DXP). The chain is 1-deoxy-D-xylulose-5-phosphate synthase from Prochlorococcus marinus (strain NATL2A).